Consider the following 272-residue polypeptide: MMLGLENKLKLYGFNNLTKTLSFNIYDVCYAKSEREQKDYIAYIDEQYNSERLTNILCDVTEMIGAHVLNISKQDYDPQGASVTILISEETLAVKEIDKSCNLGQIDILKTRDTIVGHLDKSHVTVHTYPEYHPDNSIATFRVDIDVSTCGEVSPVNALNYLIGSFDSDIITIDYRVRGFTRDIDGKKLFIDHKITSIQDYIDENTLKKYDAVDINVYQSNIFHTKMLIKEIELQNYLFNRDVYEIKPKQRLEIENNLRKEMIEIFSGTNIY.

Residue Ser-122 is the Schiff-base intermediate with substrate; via pyruvic acid of the active site. Ser-122 is modified (pyruvic acid (Ser); by autocatalysis). The active-site Proton acceptor; for processing activity is the His-127. Cys-150 serves as the catalytic Proton donor; for catalytic activity.

The protein belongs to the prokaryotic AdoMetDC family. Type 2 subfamily. In terms of assembly, heterooctamer of four alpha and four beta chains arranged as a tetramer of alpha/beta heterodimers. It depends on pyruvate as a cofactor. Post-translationally, is synthesized initially as an inactive proenzyme. Formation of the active enzyme involves a self-maturation process in which the active site pyruvoyl group is generated from an internal serine residue via an autocatalytic post-translational modification. Two non-identical subunits are generated from the proenzyme in this reaction, and the pyruvate is formed at the N-terminus of the alpha chain, which is derived from the carboxyl end of the proenzyme. The post-translation cleavage follows an unusual pathway, termed non-hydrolytic serinolysis, in which the side chain hydroxyl group of the serine supplies its oxygen atom to form the C-terminus of the beta chain, while the remainder of the serine residue undergoes an oxidative deamination to produce ammonia and the pyruvoyl group blocking the N-terminus of the alpha chain.

The enzyme catalyses S-adenosyl-L-methionine + H(+) = S-adenosyl 3-(methylsulfanyl)propylamine + CO2. The protein operates within amine and polyamine biosynthesis; S-adenosylmethioninamine biosynthesis; S-adenosylmethioninamine from S-adenosyl-L-methionine: step 1/1. Catalyzes the decarboxylation of S-adenosylmethionine to S-adenosylmethioninamine (dcAdoMet), the propylamine donor required for the synthesis of the polyamines spermine and spermidine from the diamine putrescine. The sequence is that of S-adenosylmethionine decarboxylase proenzyme from Clostridium botulinum (strain Alaska E43 / Type E3).